The following is a 226-amino-acid chain: MNVLEQLMTYYAQNGSYVMDEFGRHFLMSAYGVLFAAVVGVPAGILIAHFRRLSAWVFAVTNVIQTIPALAMLAVLMLVMGLGANTVILSLFLYSLLPIIRNTYTGIISIEHAYLESGKAMGMTKFQVLRMVELPLALSVIMAGLRTALVIAIGITAIGTFVGAGGLGDMIVRGSNATNGTAIILAGAIPTAVMAVGADLLMAWLERALSPVKKKRTGAKHVQSAA.

An ABC transmembrane type-1 domain is found at 22–202 (FGRHFLMSAY…VMAVGADLLM (181 aa)). The next 5 membrane-spanning stretches (helical) occupy residues 27 to 47 (LMSA…GILI), 52 to 72 (RLSA…ALAM), 73 to 93 (LAVL…SLFL), 148 to 168 (ALVI…GGLG), and 182 to 202 (AIIL…DLLM).

It belongs to the binding-protein-dependent transport system permease family. CysTW subfamily.

It localises to the cell membrane. In terms of biological role, involved in a high affinity multicomponent binding-protein-dependent transport system for choline; probably responsible for the translocation of the substrate across the membrane. This is Choline transport system permease protein OpuBD (opuBD) from Bacillus subtilis (strain 168).